A 327-amino-acid chain; its full sequence is ATP-dependent 6-phosphofructokinase (327 aa).

Gly-12 lines the ATP pocket. ADP is bound by residues 22–26 and 55–60; these read RGVVR and RYSVSD. Residues 73 to 74 and 103 to 106 each bind ATP; these read RF and GDGS. Asp-104 contributes to the Mg(2+) binding site. Position 127–129 (127–129) interacts with substrate; it reads TID. The active-site Proton acceptor is the Asp-129. Arg-156 is an ADP binding site. Substrate contacts are provided by residues Arg-164 and 171-173; that span reads MGR. ADP is bound by residues 187–189, Lys-213, and 215–217; these read GCE and KKH. Substrate contacts are provided by residues Glu-224, Arg-245, and 251–254; that span reads HIQR.

Belongs to the phosphofructokinase type A (PFKA) family. ATP-dependent PFK group I subfamily. Prokaryotic clade 'B1' sub-subfamily. As to quaternary structure, homotetramer. Mg(2+) is required as a cofactor.

The protein resides in the cytoplasm. It catalyses the reaction beta-D-fructose 6-phosphate + ATP = beta-D-fructose 1,6-bisphosphate + ADP + H(+). Its pathway is carbohydrate degradation; glycolysis; D-glyceraldehyde 3-phosphate and glycerone phosphate from D-glucose: step 3/4. With respect to regulation, allosterically activated by ADP and other diphosphonucleosides, and allosterically inhibited by phosphoenolpyruvate. Its function is as follows. Catalyzes the phosphorylation of D-fructose 6-phosphate to fructose 1,6-bisphosphate by ATP, the first committing step of glycolysis. In Yersinia pseudotuberculosis serotype O:1b (strain IP 31758), this protein is ATP-dependent 6-phosphofructokinase.